Reading from the N-terminus, the 250-residue chain is Aquaporin (250 aa).

Residues 1–15 (MTRETLKTLQSTFGE) are Cytoplasmic-facing. A helical membrane pass occupies residues 16–36 (MVASFVFGFAVYSALLGSALT). The Extracellular portion of the chain corresponds to 37–42 (EQSAAR). A helical membrane pass occupies residues 43–63 (VIVGLTVGFSGICVIYSFCDV). The Cytoplasmic segment spans residues 64–86 (TVAHFNPAITLAAILTCKLGVLR). The short motif at 69–71 (NPA) is the NPA element. A helical membrane pass occupies residues 87–107 (GIGYIVAQYIGFILAVCALLP). At 108 to 133 (CSPVGYKETLNIIRPTPSPFGGDNLN) the chain is on the extracellular side. Residues 134–154 (VFFTEFFLTAILVHVAFATAV) traverse the membrane as a helical segment. At 155 to 179 (NPYKPKTDTEGKFVDPDEEEPVDRR) the chain is on the cytoplasmic side. A helical transmembrane segment spans residues 180–200 (ITAPLCIGLTLGFLAFLGLAS). Over 201–224 (SGGAFNPGLTLAPVIMSNTWNHFW) the chain is Extracellular. Positions 206 to 208 (NPG) match the NPG motif. The helical transmembrane segment at 225–245 (AYFAGQYLGGFVGGLLQVLVL) threads the bilayer. Over 246-250 (YKLSF) the chain is Cytoplasmic.

This sequence belongs to the MIP/aquaporin (TC 1.A.8) family.

Its subcellular location is the cell membrane. Functionally, water channel required to facilitate the transport of water across membranes. Involved in osmotolerance. The sequence is that of Aquaporin (AQP) from Encephalitozoon cuniculi (strain GB-M1) (Microsporidian parasite).